The following is a 442-amino-acid chain: MITPKVLSGFKDRLPKDAIQKAQLLAKVSVVFQSFGFVPIETPHLEYAEVLLPDASSDIQKEIYRFKDHGDRDVALRFDLTVPLARFVSLHHQILGMPFKRYAIGNVFRGERAQKGRYREFTQCDFDFIGSESLVCDAEIIQVIVASLKALDLEDFCVSINHRKILNGICEYFGVSQVNEALRIVDKLEKIGLNGVEEELKKECDLNSNTIKELLEMVQIKQDDLSHAEFFEKIAYLKDYNENLKKGIQDLERLYQLLGDLQISQNLYKIDFSIARGLGYYTGIVYETTLNEMKSLGSVCSGGRYDHLTKNFSKENLQGVGASIGIDRLIVALNEMQLLDERSTQAKVLIACMHEEYFSYANRLAESLRQSGIFSEVYPEAQKIKKPFSYANHKGHEFVAVIGEEEFKSETLSLKNMHSGMQLNCLSFLKALEIIGENDEDL.

It belongs to the class-II aminoacyl-tRNA synthetase family. As to quaternary structure, homodimer.

Its subcellular location is the cytoplasm. It carries out the reaction tRNA(His) + L-histidine + ATP = L-histidyl-tRNA(His) + AMP + diphosphate + H(+). The sequence is that of Histidine--tRNA ligase from Helicobacter pylori (strain HPAG1).